The sequence spans 41 residues: Photosystem II reaction center protein X (41 aa).

Over 2–6 (TITPS) the chain is Lumenal. Residues 7 to 29 (LKGFFIGLLSGAVVLGLTFAVLI) traverse the membrane as a helical segment. Residues 30–41 (AISQIDKVQRSL) are Cytoplasmic-facing.

The protein belongs to the PsbX family. Type 1 subfamily. In terms of assembly, PSII is composed of 1 copy each of membrane proteins PsbA, PsbB, PsbC, PsbD, PsbE, PsbF, PsbH, PsbI, PsbJ, PsbK, PsbL, PsbM, PsbT, PsbX, PsbY, PsbZ, Psb30/Ycf12, peripheral proteins PsbO, CyanoQ (PsbQ), PsbU, PsbV and a large number of cofactors. It forms dimeric complexes. Part of a photosystem II (PSII) assembly intermediate complex PSII-I; crystallized from a strain deleted of psbJ, it forms monomeric PSII before addition of the oxygen evolving complex. PSII-I includes 3 assembly factors not found in mature PSII (Psb27, Psb28 and Psb34). Requires PSII binds multiple chlorophylls, carotenoids and specific lipids. as cofactor.

It is found in the cellular thylakoid membrane. Involved in the binding and/or turnover of quinones at the Q(B) site of photosystem II (PSII). PSII is a light-driven water plastoquinone oxidoreductase, using light energy to abstract electrons from H(2)O, generating a proton gradient subsequently used for ATP formation. In Thermosynechococcus vestitus (strain NIES-2133 / IAM M-273 / BP-1), this protein is Photosystem II reaction center protein X.